We begin with the raw amino-acid sequence, 439 residues long: Glutamate--tRNA ligase 2 (439 aa).

Positions 6-16 match the 'HIGH' region motif; that stretch reads PSPTGDMHIGN. The short motif at 232–236 is the 'KMSKS' region element; the sequence is KMSKR. Lys235 is a binding site for ATP.

Belongs to the class-I aminoacyl-tRNA synthetase family. Glutamate--tRNA ligase type 1 subfamily. In terms of assembly, monomer.

Its subcellular location is the cytoplasm. The enzyme catalyses tRNA(Glu) + L-glutamate + ATP = L-glutamyl-tRNA(Glu) + AMP + diphosphate. Its function is as follows. Catalyzes the attachment of glutamate to tRNA(Glu) in a two-step reaction: glutamate is first activated by ATP to form Glu-AMP and then transferred to the acceptor end of tRNA(Glu). The protein is Glutamate--tRNA ligase 2 of Helicobacter pylori (strain P12).